Reading from the N-terminus, the 422-residue chain is G-protein coupled receptor 83 (422 aa).

An N-terminal signal peptide occupies residues 1–17 (MNVPPVLLLFLLSSVRA). The Extracellular segment spans residues 18–70 (TEQPQVVTEHPSMDAALTGANASHFWANYTFSDWQNFVGRRRYGAESQNPTVK). Residues 71–91 (ALLIVAYSFIIVFSLFGNVLV) form a helical membrane-spanning segment. The Cytoplasmic segment spans residues 92-106 (CHVIFKNQRMHSATS). Residues 107–127 (LFIVNLAVADIMITLLNTPFT) traverse the membrane as a helical segment. Residues 128 to 143 (LVRFVNSTWVFGKGMC) are Extracellular-facing. An intrachain disulfide couples Cys143 to Cys223. A helical transmembrane segment spans residues 144-166 (HVSRFAQYCSLHVSALTLTAIAV). The Cytoplasmic segment spans residues 167–184 (DRHQVIMHPLKPRISITK). Residues 185–205 (GVIYIAVIWVMATFFSLPHAI) traverse the membrane as a helical segment. Residues 206–236 (CQKLFTFKYSEDIVRSLCLPDFPEPADLFWK) are Extracellular-facing. The helical transmembrane segment at 237–257 (YLDLATFILLYLLPLFIISVA) threads the bilayer. Over 258-292 (YARVAKKLWLCNTIGDVTTEQYLALRRKKKTTVKM) the chain is Cytoplasmic. The chain crosses the membrane as a helical span at residues 293-313 (LVLVVVLFALCWFPLNCYVLL). Topologically, residues 314–326 (LSSKAIHTNNALY) are extracellular. Residues 327–347 (FAFHWFAMSSTCYNPFIYCWL) form a helical membrane-spanning segment. The Cytoplasmic portion of the chain corresponds to 348-422 (NENFRVELKA…SSVEPTVAVS (75 aa)). Residues 401–422 (PSSQIQSGKTDLSSVEPTVAVS) are disordered.

This sequence belongs to the G-protein coupled receptor 1 family. In terms of tissue distribution, expressed preferentially in brain, and its neuronal expression is relegated to limbic brain regions, particularly in forebrain.

It localises to the cell membrane. Its function is as follows. G-protein coupled receptor for PEN, a neuropeptide produced from the precursor protein, proSAAS (encoded by PCSK1N). Acts through a G(i)- and G(q)-alpha-alpha-mediated pathway in response to PEN. Plays a role in food intake and body weight regulation. May contribute to the regulation of anxiety-related behaviors. The protein is G-protein coupled receptor 83 of Rattus norvegicus (Rat).